A 206-amino-acid polypeptide reads, in one-letter code: Max dimerization protein 3 (206 aa).

Residues 8 to 25 (IQVLLQAAEFLERREREA) form an interaction with SIN3A and SIN3B region. Residues 57-109 (SGRHVHNELEKRRRAQLKRCLEQLRQQMPLGVDHTRYTTLSLLRGARMHIQKL) form the bHLH domain.

In terms of assembly, efficient DNA binding requires dimerization with another bHLH protein. Binds DNA as a heterodimer with MAX. Interacts with SIN3A AND SIN3B. Interacts with RNF17.

The protein resides in the nucleus. Functionally, transcriptional repressor. Binds with MAX to form a sequence-specific DNA-binding protein complex which recognizes the core sequence 5'-CAC[GA]TG-3'. Antagonizes MYC transcriptional activity by competing for MAX and suppresses MYC dependent cell transformation. The sequence is that of Max dimerization protein 3 (Mxd3) from Rattus norvegicus (Rat).